The following is a 582-amino-acid chain: Urocanate reductase (582 aa).

The first 20 residues, M1–G20, serve as a signal peptide directing secretion. C21 carries N-palmitoyl cysteine lipidation. A lipid anchor (S-diacylglycerol cysteine) is attached at C21. T93 is modified (FMN phosphoryl threonine). Positions 143, 162, 170, 171, 175, 176, 285, and 352 each coordinate FAD. Catalysis depends on R411, which acts as the Proton donor. Positions 521, 550, and 565 each coordinate FAD.

It belongs to the FAD-dependent oxidoreductase 2 family. FRD/SDH subfamily. The cofactor is FAD. It depends on FMN as a cofactor.

The protein resides in the cell membrane. It carries out the reaction dihydrourocanate + A = urocanate + AH2. Its function is as follows. Catalyzes the two-electron reduction of urocanate to dihydrourocanate (also named imidazole propionate or deamino-histidine). The physiological electron donor is unknown; it might be the membrane-bound tetraheme cytochrome c (CymA). Enables anaerobic growth with urocanate as a sole terminal electron acceptor, and thus can provide the cells with a niche where no other bacteria can compete and survive. Is unable to reduce cinnamate and other unsaturated organic acids such as acrylic, crotonic, fumaric and orotic acids. Has no fumarate reductase or succinate dehydrogenase activity. The polypeptide is Urocanate reductase (urdA) (Shewanella oneidensis (strain ATCC 700550 / JCM 31522 / CIP 106686 / LMG 19005 / NCIMB 14063 / MR-1)).